Here is a 203-residue protein sequence, read N- to C-terminus: Translation initiation factor IF-3 (203 aa).

Over residues Glu-172–Glu-182 the composition is skewed to basic and acidic residues. The interval Glu-172–Asp-203 is disordered.

This sequence belongs to the IF-3 family. As to quaternary structure, monomer.

The protein resides in the cytoplasm. Functionally, IF-3 binds to the 30S ribosomal subunit and shifts the equilibrium between 70S ribosomes and their 50S and 30S subunits in favor of the free subunits, thus enhancing the availability of 30S subunits on which protein synthesis initiation begins. The polypeptide is Translation initiation factor IF-3 (Helicobacter pylori (strain ATCC 700392 / 26695) (Campylobacter pylori)).